The chain runs to 285 residues: Nucleotide-binding protein PSPPH_4154 (285 aa).

8–15 (GRSGSGKS) contributes to the ATP binding site. Position 60-63 (60-63 (DARN)) interacts with GTP.

It belongs to the RapZ-like family.

Its function is as follows. Displays ATPase and GTPase activities. This is Nucleotide-binding protein PSPPH_4154 from Pseudomonas savastanoi pv. phaseolicola (strain 1448A / Race 6) (Pseudomonas syringae pv. phaseolicola (strain 1448A / Race 6)).